Reading from the N-terminus, the 336-residue chain is Dihydroorotate dehydrogenase (quinone) (336 aa).

FMN is bound by residues 62–66 (AGLDK) and Thr86. Lys66 serves as a coordination point for substrate. Residue 111-115 (NRMGF) coordinates substrate. FMN is bound by residues Asn139 and Asn172. Position 172 (Asn172) interacts with substrate. Ser175 serves as the catalytic Nucleophile. Asn177 contacts substrate. Residues Lys217 and Thr245 each contribute to the FMN site. Position 246 to 247 (246 to 247 (NT)) interacts with substrate. Residues Gly268, Gly297, and 318-319 (YS) each bind FMN.

The protein belongs to the dihydroorotate dehydrogenase family. Type 2 subfamily. As to quaternary structure, monomer. Requires FMN as cofactor.

The protein resides in the cell membrane. The enzyme catalyses (S)-dihydroorotate + a quinone = orotate + a quinol. The protein operates within pyrimidine metabolism; UMP biosynthesis via de novo pathway; orotate from (S)-dihydroorotate (quinone route): step 1/1. Its function is as follows. Catalyzes the conversion of dihydroorotate to orotate with quinone as electron acceptor. The polypeptide is Dihydroorotate dehydrogenase (quinone) (Salmonella agona (strain SL483)).